A 321-amino-acid polypeptide reads, in one-letter code: Lipoyl synthase (321 aa).

Positions 68, 73, 79, 94, 98, 101, and 308 each coordinate [4Fe-4S] cluster. Residues 80–297 form the Radical SAM core domain; the sequence is FNHGTATFMI…KEIALELGFT (218 aa).

This sequence belongs to the radical SAM superfamily. Lipoyl synthase family. It depends on [4Fe-4S] cluster as a cofactor.

It localises to the cytoplasm. The catalysed reaction is [[Fe-S] cluster scaffold protein carrying a second [4Fe-4S](2+) cluster] + N(6)-octanoyl-L-lysyl-[protein] + 2 oxidized [2Fe-2S]-[ferredoxin] + 2 S-adenosyl-L-methionine + 4 H(+) = [[Fe-S] cluster scaffold protein] + N(6)-[(R)-dihydrolipoyl]-L-lysyl-[protein] + 4 Fe(3+) + 2 hydrogen sulfide + 2 5'-deoxyadenosine + 2 L-methionine + 2 reduced [2Fe-2S]-[ferredoxin]. Its pathway is protein modification; protein lipoylation via endogenous pathway; protein N(6)-(lipoyl)lysine from octanoyl-[acyl-carrier-protein]: step 2/2. In terms of biological role, catalyzes the radical-mediated insertion of two sulfur atoms into the C-6 and C-8 positions of the octanoyl moiety bound to the lipoyl domains of lipoate-dependent enzymes, thereby converting the octanoylated domains into lipoylated derivatives. This is Lipoyl synthase from Vibrio cholerae serotype O1 (strain ATCC 39541 / Classical Ogawa 395 / O395).